The primary structure comprises 197 residues: MEKITASVRLKKTRGERNRLLKEGKVPGVMYGKNIEPVAVAVNARELESLVERGLKLFELSVEGKTQRVLVKELQHHPVTGKLIHVDFQVVESGRKIRQLVPVELYGEPAGVKAGGILEHGLSEVTVECLPEDLPEFIEADVSKLEVGDCLRVKDLELPPGVRVIEDPESIIALISAPRDYVEEEEETTTSAPEATA.

The protein belongs to the bacterial ribosomal protein bL25 family. CTC subfamily. Part of the 50S ribosomal subunit; part of the 5S rRNA/L5/L18/L25 subcomplex. Contacts the 5S rRNA. Binds to the 5S rRNA independently of L5 and L18.

This is one of the proteins that binds to the 5S RNA in the ribosome where it forms part of the central protuberance. The sequence is that of Large ribosomal subunit protein bL25 from Carboxydothermus hydrogenoformans (strain ATCC BAA-161 / DSM 6008 / Z-2901).